We begin with the raw amino-acid sequence, 175 residues long: Large ribosomal subunit protein uL10 (175 aa).

It belongs to the universal ribosomal protein uL10 family. As to quaternary structure, part of the ribosomal stalk of the 50S ribosomal subunit. The N-terminus interacts with L11 and the large rRNA to form the base of the stalk. The C-terminus forms an elongated spine to which L12 dimers bind in a sequential fashion forming a multimeric L10(L12)X complex.

In terms of biological role, forms part of the ribosomal stalk, playing a central role in the interaction of the ribosome with GTP-bound translation factors. This chain is Large ribosomal subunit protein uL10, found in Psychrobacter arcticus (strain DSM 17307 / VKM B-2377 / 273-4).